The following is a 385-amino-acid chain: 1-deoxy-D-xylulose 5-phosphate reductoisomerase (385 aa).

Residues Thr10, Gly11, Ser12, Ile13, Lys37, and Asn124 each contribute to the NADPH site. Position 125 (Lys125) interacts with 1-deoxy-D-xylulose 5-phosphate. Residue Glu126 participates in NADPH binding. Asp150 is a binding site for Mn(2+). 1-deoxy-D-xylulose 5-phosphate is bound by residues Ser151, Glu152, Ser176, and His199. Glu152 contributes to the Mn(2+) binding site. Gly205 is a binding site for NADPH. 1-deoxy-D-xylulose 5-phosphate is bound by residues Ser212, Asn217, Lys218, and Glu221. A Mn(2+)-binding site is contributed by Glu221.

The protein belongs to the DXR family. Mg(2+) serves as cofactor. Requires Mn(2+) as cofactor.

The enzyme catalyses 2-C-methyl-D-erythritol 4-phosphate + NADP(+) = 1-deoxy-D-xylulose 5-phosphate + NADPH + H(+). It functions in the pathway isoprenoid biosynthesis; isopentenyl diphosphate biosynthesis via DXP pathway; isopentenyl diphosphate from 1-deoxy-D-xylulose 5-phosphate: step 1/6. In terms of biological role, catalyzes the NADPH-dependent rearrangement and reduction of 1-deoxy-D-xylulose-5-phosphate (DXP) to 2-C-methyl-D-erythritol 4-phosphate (MEP). This is 1-deoxy-D-xylulose 5-phosphate reductoisomerase from Clostridium novyi (strain NT).